Here is a 1226-residue protein sequence, read N- to C-terminus: Probable phosphorylase b kinase regulatory subunit alpha (1226 aa).

Positions 666–688 (NEKITTPRGPRTLRRGESVKDRS) are disordered. The span at 679-688 (RRGESVKDRS) shows a compositional bias: basic and acidic residues.

It belongs to the phosphorylase b kinase regulatory chain family.

Its pathway is glycan biosynthesis; glycogen metabolism. In terms of biological role, phosphorylase b kinase catalyzes the phosphorylation of serine in certain substrates, including troponin I. The alpha chain may bind calmodulin. The sequence is that of Probable phosphorylase b kinase regulatory subunit alpha from Caenorhabditis elegans.